The sequence spans 229 residues: Flagellar L-ring protein (229 aa).

A signal peptide spans 1 to 23 (MNPLTRVALAVAAFAALVLALSA). The N-palmitoyl cysteine moiety is linked to residue C24. C24 carries S-diacylglycerol cysteine lipidation.

This sequence belongs to the FlgH family. The basal body constitutes a major portion of the flagellar organelle and consists of four rings (L,P,S, and M) mounted on a central rod.

The protein resides in the cell outer membrane. It is found in the bacterial flagellum basal body. In terms of biological role, assembles around the rod to form the L-ring and probably protects the motor/basal body from shearing forces during rotation. The polypeptide is Flagellar L-ring protein (Anaeromyxobacter sp. (strain K)).